The sequence spans 110 residues: Snake venom vascular endothelial growth factor toxin HF (110 aa).

Residue Gln1 is modified to Pyrrolidone carboxylic acid. 3 cysteine pairs are disulfide-bonded: Cys14-Cys56, Cys45-Cys91, and Cys49-Cys93.

This sequence belongs to the PDGF/VEGF growth factor family. Snake venom VEGF subfamily. Homodimer; disulfide-linked. Interacts with VEGF receptor-2 (KDR) with high affinity. As to expression, expressed by the venom gland.

It is found in the secreted. Its function is as follows. Snake venom VEGFs that may contribute to venom dispersion and prey subjugation by inducing vascular permeability and hypotension. This protein induces an increase in capillary permeability after intradermal injection, as well as a drastic hypotensive effect after intravenous injection. The hypotension is mediated by nitric oxide (NO), which is produced by VEGF-activated endothelium NO synthase. Also induces angiogenesis in vitro, probably through VEGF receptor (KDR/VEGFR-2) signaling. The polypeptide is Snake venom vascular endothelial growth factor toxin HF (Vipera aspis aspis (Aspic viper)).